The chain runs to 276 residues: Putative E3 ubiquitin-protein ligase SINA-like 9 (276 aa).

The RING-type zinc-finger motif lies at 38 to 74 (CPICCEALTSPIFQCDNGHLACGSCCPKLSNKCPACT). The tract at residues 88-274 (VLESILIPCP…MQVFIIENVD (187 aa)) is SBD. The SIAH-type zinc finger occupies 91–149 (SILIPCPNVRFGCTKSFFYGKESAHEKECIFSQCSCPSSVCDYTGSYKDLYAHYKLTHS). Residues cysteine 96, cysteine 103, histidine 115, cysteine 119, cysteine 126, cysteine 131, histidine 143, and histidine 148 each contribute to the Zn(2+) site.

It belongs to the SINA (Seven in absentia) family.

The catalysed reaction is S-ubiquitinyl-[E2 ubiquitin-conjugating enzyme]-L-cysteine + [acceptor protein]-L-lysine = [E2 ubiquitin-conjugating enzyme]-L-cysteine + N(6)-ubiquitinyl-[acceptor protein]-L-lysine.. The protein operates within protein modification; protein ubiquitination. Its function is as follows. E3 ubiquitin-protein ligase that mediates ubiquitination and subsequent proteasomal degradation of target proteins. E3 ubiquitin ligases accept ubiquitin from an E2 ubiquitin-conjugating enzyme in the form of a thioester and then directly transfers the ubiquitin to targeted substrates. It probably triggers the ubiquitin-mediated degradation of different substrates. The chain is Putative E3 ubiquitin-protein ligase SINA-like 9 from Arabidopsis thaliana (Mouse-ear cress).